A 597-amino-acid chain; its full sequence is Phragmoplastin interacting protein 1 (597 aa).

A disordered region spans residues 18–136 (ESLSVSVSET…KTPKKAEEGN (119 aa)). Residues 20–29 (LSVSVSETNP) show a composition bias toward polar residues. A compositionally biased stretch (low complexity) spans 30 to 40 (QSQSLKLLLDS). Composition is skewed to basic residues over residues 43–53 (HKPRLSKREKR) and 112–129 (QKKK…NKTP). The short motif at 112–119 (QKKKNKKK) is the Nuclear localization signal element. RRM domains follow at residues 161–238 (NKLY…QYVK) and 262–338 (NRVY…CALK). 3 CCHC-type zinc fingers span residues 397–411 (CYEC…TACP), 481–495 (CYEC…TACP), and 576–591 (CYEC…ACPN).

As to quaternary structure, interacts with phragmoplastins (e.g. DRP1A, DRP1B, DRP1C, DRP1D and DRP1E) and with GTP-bound ARAC11/ROP1 as well as with Ran2 transcripts.

It localises to the nucleus. It is found in the cell membrane. The protein resides in the cytoplasm. The protein localises to the cytoskeleton. Its subcellular location is the phragmoplast. In terms of biological role, RNA-binding protein which mediates polarized mRNA (e.g. Ran2 transcripts mRNA) transport from the nucleus to the vicinity of the cell plate during cytokinesis and phragmoplast formation. The chain is Phragmoplastin interacting protein 1 from Arabidopsis thaliana (Mouse-ear cress).